The following is a 264-amino-acid chain: S-adenosylmethionine decarboxylase proenzyme (264 aa).

The active-site Schiff-base intermediate with substrate; via pyruvic acid is S111. Position 111 is a pyruvic acid (Ser); by autocatalysis (S111). Catalysis depends on H116, which acts as the Proton acceptor; for processing activity. The active-site Proton donor; for catalytic activity is C139.

Belongs to the prokaryotic AdoMetDC family. Type 2 subfamily. In terms of assembly, heterooctamer of four alpha and four beta chains arranged as a tetramer of alpha/beta heterodimers. Requires pyruvate as cofactor. Post-translationally, is synthesized initially as an inactive proenzyme. Formation of the active enzyme involves a self-maturation process in which the active site pyruvoyl group is generated from an internal serine residue via an autocatalytic post-translational modification. Two non-identical subunits are generated from the proenzyme in this reaction, and the pyruvate is formed at the N-terminus of the alpha chain, which is derived from the carboxyl end of the proenzyme. The post-translation cleavage follows an unusual pathway, termed non-hydrolytic serinolysis, in which the side chain hydroxyl group of the serine supplies its oxygen atom to form the C-terminus of the beta chain, while the remainder of the serine residue undergoes an oxidative deamination to produce ammonia and the pyruvoyl group blocking the N-terminus of the alpha chain.

The enzyme catalyses S-adenosyl-L-methionine + H(+) = S-adenosyl 3-(methylsulfanyl)propylamine + CO2. The protein operates within amine and polyamine biosynthesis; S-adenosylmethioninamine biosynthesis; S-adenosylmethioninamine from S-adenosyl-L-methionine: step 1/1. In terms of biological role, catalyzes the decarboxylation of S-adenosylmethionine to S-adenosylmethioninamine (dcAdoMet), the propylamine donor required for the synthesis of the polyamines spermine and spermidine from the diamine putrescine. The chain is S-adenosylmethionine decarboxylase proenzyme from Geobacillus kaustophilus (strain HTA426).